A 74-amino-acid polypeptide reads, in one-letter code: Large ribosomal subunit protein bL31 (74 aa).

Zn(2+)-binding residues include Cys-16, Cys-18, Cys-37, and Cys-40.

Belongs to the bacterial ribosomal protein bL31 family. Type A subfamily. Part of the 50S ribosomal subunit. Zn(2+) is required as a cofactor.

Its function is as follows. Binds the 23S rRNA. The polypeptide is Large ribosomal subunit protein bL31 (Nitrosomonas europaea (strain ATCC 19718 / CIP 103999 / KCTC 2705 / NBRC 14298)).